Reading from the N-terminus, the 334-residue chain is Ketol-acid reductoisomerase (NADP(+)) (334 aa).

Positions 1–181 constitute a KARI N-terminal Rossmann domain; it reads MNIYYDKNAD…GGGRTGILET (181 aa). Residues 24-27, Arg47, Ser50, Ser52, and 82-85 each bind NADP(+); these read YGSQ and DEFQ. The active site involves His107. Gly133 contacts NADP(+). One can recognise a KARI C-terminal knotted domain in the interval 182 to 323; that stretch reads SFKDETETDL…ESLRSMMPWI (142 aa). Residues Asp190, Glu194, Glu226, and Glu230 each coordinate Mg(2+). Ser251 is a substrate binding site.

This sequence belongs to the ketol-acid reductoisomerase family. It depends on Mg(2+) as a cofactor.

It catalyses the reaction (2R)-2,3-dihydroxy-3-methylbutanoate + NADP(+) = (2S)-2-acetolactate + NADPH + H(+). The enzyme catalyses (2R,3R)-2,3-dihydroxy-3-methylpentanoate + NADP(+) = (S)-2-ethyl-2-hydroxy-3-oxobutanoate + NADPH + H(+). It functions in the pathway amino-acid biosynthesis; L-isoleucine biosynthesis; L-isoleucine from 2-oxobutanoate: step 2/4. The protein operates within amino-acid biosynthesis; L-valine biosynthesis; L-valine from pyruvate: step 2/4. In terms of biological role, involved in the biosynthesis of branched-chain amino acids (BCAA). Catalyzes an alkyl-migration followed by a ketol-acid reduction of (S)-2-acetolactate (S2AL) to yield (R)-2,3-dihydroxy-isovalerate. In the isomerase reaction, S2AL is rearranged via a Mg-dependent methyl migration to produce 3-hydroxy-3-methyl-2-ketobutyrate (HMKB). In the reductase reaction, this 2-ketoacid undergoes a metal-dependent reduction by NADPH to yield (R)-2,3-dihydroxy-isovalerate. The sequence is that of Ketol-acid reductoisomerase (NADP(+)) from Vesicomyosocius okutanii subsp. Calyptogena okutanii (strain HA).